The sequence spans 1090 residues: Protein unc-13 homolog D (1090 aa).

One can recognise a C2 1 domain in the interval Glu-92–Gln-239. Ca(2+)-binding residues include Asp-127 and Asp-133. Ser-150 carries the post-translational modification Phosphoserine. Ca(2+) is bound by residues Asp-206 and Asp-208. The segment at Asp-240–Val-543 is interaction with RAB27A. Residues Phe-557 to Ile-677 form the MHD1 domain. The region spanning Glu-788 to Tyr-895 is the MHD2 domain. A C2 2 domain is found at Glu-910–Gly-1035. 6 residues coordinate Ca(2+): Leu-940, Asp-941, Asp-947, Asp-1005, Asp-1007, and Asp-1013. The segment at Pro-1026–Ala-1048 is disordered.

It belongs to the unc-13 family. Interacts with DOC2A. Interacts with RAB27A. Interacts with RHOG; the interaction increases RhoG affinity to the membrane lipids, targets UNC13D to membrane lipids and facilitates cytotoxic granule (CG) docking to the plasma membrane. It depends on Ca(2+) as a cofactor. As to expression, expressed at high levels in spleen, thymus and leukocytes. Also expressed in lung and placenta, and at very low levels in brain, heart, skeletal muscle and kidney. Expressed in cytotoxic T-lymphocytes (CTL) and mast cells.

It localises to the cytoplasm. Its subcellular location is the membrane. It is found in the late endosome. The protein resides in the recycling endosome. The protein localises to the lysosome. In terms of biological role, plays a role in cytotoxic granule exocytosis in lymphocytes. Required for both granule maturation and granule docking and priming at the immunologic synapse. Regulates assembly of recycling and late endosomal structures, leading to the formation of an endosomal exocytic compartment that fuses with perforin-containing granules at the immunologic synapse and licences them for exocytosis. Regulates Ca(2+)-dependent secretory lysosome exocytosis in mast cells. This Homo sapiens (Human) protein is Protein unc-13 homolog D (UNC13D).